The primary structure comprises 428 residues: Enolase (428 aa).

A (2R)-2-phosphoglycerate-binding site is contributed by glutamine 163. Glutamate 205 acts as the Proton donor in catalysis. The Mg(2+) site is built by aspartate 242, glutamate 286, and aspartate 313. (2R)-2-phosphoglycerate-binding residues include lysine 338, arginine 367, serine 368, and lysine 389. The Proton acceptor role is filled by lysine 338.

This sequence belongs to the enolase family. Mg(2+) is required as a cofactor.

It localises to the cytoplasm. It is found in the secreted. Its subcellular location is the cell surface. It carries out the reaction (2R)-2-phosphoglycerate = phosphoenolpyruvate + H2O. The protein operates within carbohydrate degradation; glycolysis; pyruvate from D-glyceraldehyde 3-phosphate: step 4/5. Functionally, catalyzes the reversible conversion of 2-phosphoglycerate (2-PG) into phosphoenolpyruvate (PEP). It is essential for the degradation of carbohydrates via glycolysis. The protein is Enolase of Acidovorax sp. (strain JS42).